Here is a 616-residue protein sequence, read N- to C-terminus: Glucoamylase P (616 aa).

A signal peptide spans 1–29 (MRLLPSSCAGALSLLCSLAIAAPTELKAR). Residue Trp149 coordinates substrate. Asn200 carries an N-linked (GlcNAc...) asparagine glycan. Asp205 (proton acceptor) is an active-site residue. Glu208 serves as the catalytic Proton donor. N-linked (GlcNAc...) asparagine glycosylation is present at Asn427. A CBM20 domain is found at 501 to 608 (VTSSCQVSIT…AVTTDDAWMG (108 aa)).

The protein belongs to the glycosyl hydrolase 15 family.

Its subcellular location is the secreted. The enzyme catalyses Hydrolysis of terminal (1-&gt;4)-linked alpha-D-glucose residues successively from non-reducing ends of the chains with release of beta-D-glucose.. This Amorphotheca resinae (Creosote fungus) protein is Glucoamylase P (GAMP).